The sequence spans 96 residues: UPF0235 protein VV2877 (96 aa).

This sequence belongs to the UPF0235 family.

This chain is UPF0235 protein VV2877, found in Vibrio vulnificus (strain YJ016).